Here is a 194-residue protein sequence, read N- to C-terminus: Holliday junction branch migration complex subunit RuvA (194 aa).

The segment at 1-64 (MISRLTGKLV…EDAHLLFGFA (64 aa)) is domain I. The domain II stretch occupies residues 65–143 (TAEERKTFRQ…AHTVTDGLFA (79 aa)). The interval 144–147 (ASPA) is flexible linker. Residues 147 to 194 (AADETEDIVSTLLALGYNEREAKAAVKGVPKGTDVGEGVRLALKNLLK) are domain III.

It belongs to the RuvA family. In terms of assembly, homotetramer. Forms an RuvA(8)-RuvB(12)-Holliday junction (HJ) complex. HJ DNA is sandwiched between 2 RuvA tetramers; dsDNA enters through RuvA and exits via RuvB. An RuvB hexamer assembles on each DNA strand where it exits the tetramer. Each RuvB hexamer is contacted by two RuvA subunits (via domain III) on 2 adjacent RuvB subunits; this complex drives branch migration. In the full resolvosome a probable DNA-RuvA(4)-RuvB(12)-RuvC(2) complex forms which resolves the HJ.

The protein localises to the cytoplasm. Its function is as follows. The RuvA-RuvB-RuvC complex processes Holliday junction (HJ) DNA during genetic recombination and DNA repair, while the RuvA-RuvB complex plays an important role in the rescue of blocked DNA replication forks via replication fork reversal (RFR). RuvA specifically binds to HJ cruciform DNA, conferring on it an open structure. The RuvB hexamer acts as an ATP-dependent pump, pulling dsDNA into and through the RuvAB complex. HJ branch migration allows RuvC to scan DNA until it finds its consensus sequence, where it cleaves and resolves the cruciform DNA. The polypeptide is Holliday junction branch migration complex subunit RuvA (Neisseria gonorrhoeae (strain ATCC 700825 / FA 1090)).